A 318-amino-acid polypeptide reads, in one-letter code: Phosphate acetyltransferase (318 aa).

The protein belongs to the phosphate acetyltransferase and butyryltransferase family.

It localises to the cytoplasm. It catalyses the reaction acetyl-CoA + phosphate = acetyl phosphate + CoA. Its pathway is metabolic intermediate biosynthesis; acetyl-CoA biosynthesis; acetyl-CoA from acetate: step 2/2. This Paracoccus denitrificans protein is Phosphate acetyltransferase (pta).